Consider the following 780-residue polypeptide: uncharacterized protein (780 aa).

A BTB domain is found at 10 to 80 (NNNIIKLNIG…MRTGTFTLPY (71 aa)).

This is an uncharacterized protein from Dictyostelium discoideum (Social amoeba).